The chain runs to 321 residues: Electron transfer flavoprotein subunit alpha (321 aa).

FAD contacts are provided by arginine 211, serine 236, arginine 237, glutamine 250, valine 251, serine 254, glycine 255, serine 270, serine 272, glutamine 274, histidine 275, asparagine 289, aspartate 307, and isoleucine 308.

As to quaternary structure, heterodimer of an alpha and a beta subunit. Forms a ternary complex with trimethylamine dehydrogenase. It depends on FAD as a cofactor.

Heterodimeric electron transfer flavoprotein that accepts electrons from trimethylamine dehydrogenase. It transfers the electrons to the main respiratory chain via ETF-ubiquinone oxidoreductase (ETF dehydrogenase). The sequence is that of Electron transfer flavoprotein subunit alpha (etfA) from Methylophilus methylotrophus (Bacterium W3A1).